The following is a 443-amino-acid chain: Thymidine phosphorylase (443 aa).

It belongs to the thymidine/pyrimidine-nucleoside phosphorylase family. In terms of assembly, homodimer.

The catalysed reaction is thymidine + phosphate = 2-deoxy-alpha-D-ribose 1-phosphate + thymine. It participates in pyrimidine metabolism; dTMP biosynthesis via salvage pathway; dTMP from thymine: step 1/2. The enzymes which catalyze the reversible phosphorolysis of pyrimidine nucleosides are involved in the degradation of these compounds and in their utilization as carbon and energy sources, or in the rescue of pyrimidine bases for nucleotide synthesis. The protein is Thymidine phosphorylase of Shewanella sp. (strain MR-4).